The sequence spans 376 residues: Chaperone protein DnaJ (376 aa).

The J domain maps to 4–68 (DYYEILGVAR…ETRARYDRFG (65 aa)). Positions 102–121 (GGMGGPTQQRRRGGPARGDD) are disordered. A CR-type zinc finger spans residues 136 to 218 (GGEKEIRISH…CDGKGTNQVT (83 aa)). Zn(2+)-binding residues include C149, C152, C166, C169, C192, C195, C206, and C209. CXXCXGXG motif repeat units lie at residues 149–156 (CETCSGSG), 166–173 (CSTCSGSG), 192–199 (CPTCNGTG), and 206–213 (CDACDGKG).

This sequence belongs to the DnaJ family. Homodimer. The cofactor is Zn(2+).

It localises to the cytoplasm. Participates actively in the response to hyperosmotic and heat shock by preventing the aggregation of stress-denatured proteins and by disaggregating proteins, also in an autonomous, DnaK-independent fashion. Unfolded proteins bind initially to DnaJ; upon interaction with the DnaJ-bound protein, DnaK hydrolyzes its bound ATP, resulting in the formation of a stable complex. GrpE releases ADP from DnaK; ATP binding to DnaK triggers the release of the substrate protein, thus completing the reaction cycle. Several rounds of ATP-dependent interactions between DnaJ, DnaK and GrpE are required for fully efficient folding. Also involved, together with DnaK and GrpE, in the DNA replication of plasmids through activation of initiation proteins. The polypeptide is Chaperone protein DnaJ (Trichormus variabilis (strain ATCC 29413 / PCC 7937) (Anabaena variabilis)).